The chain runs to 784 residues: ATP-dependent zinc metalloprotease FTSH 9, chloroplastic/mitochondrial (784 aa).

Low complexity-rich tracts occupy residues 1–12 (MSALQASLLLRP), 24–34 (PLPSSSASFPR), and 42–53 (PLPLRALASEGP). A chloroplast and mitochondrion-targeting transit peptide spans 1–47 (MSALQASLLLRPLPSPLPPRRRLPLPSSSASFPRAGHHRRLPLPLRA). The interval 1-71 (MSALQASLLL…DPPPPELPAA (71 aa)) is disordered. A compositionally biased stretch (pro residues) spans 54–69 (QPAPSPAPDPPPPELP). The next 2 membrane-spanning stretches (helical) occupy residues 104–124 (WVLALAAAVVAAARRFFDWVV) and 267–287 (IFSTVLFTIAVGLMWVMGAAA). 368 to 375 (GSPGTGKT) is a binding site for ATP. A Zn(2+)-binding site is contributed by histidine 601. Residue glutamate 602 is part of the active site. Zn(2+) is bound by residues histidine 605 and aspartate 679.

It in the N-terminal section; belongs to the AAA ATPase family. The protein in the C-terminal section; belongs to the peptidase M41 family. Requires Zn(2+) as cofactor.

The protein localises to the mitochondrion membrane. Its subcellular location is the plastid. It is found in the chloroplast thylakoid membrane. Functionally, probable ATP-dependent zinc metallopeptidase. The sequence is that of ATP-dependent zinc metalloprotease FTSH 9, chloroplastic/mitochondrial (FTSH9) from Oryza sativa subsp. japonica (Rice).